The sequence spans 287 residues: Nucleotide-binding protein mma_3120 (287 aa).

8 to 15 lines the ATP pocket; that stretch reads GISGSGKS. 57–60 serves as a coordination point for GTP; sequence DARS.

It belongs to the RapZ-like family.

Its function is as follows. Displays ATPase and GTPase activities. In Janthinobacterium sp. (strain Marseille) (Minibacterium massiliensis), this protein is Nucleotide-binding protein mma_3120.